A 309-amino-acid chain; its full sequence is MTSPVPIAVVGPTATGKSDLALDLAERLGGEIVNIDAMQLYRGMDIGTAKLAPAERRGIPHHQLDVLDVTETATVANYQQAAVRDVEGIAARGAVPVIVGGSMMYVQSLLDEWSFPATDASVRARWEAVLAEKGVAAVHAELGRVDPEAAASILPTDGRRLVRALEVVEITGKPFAASAPRIGEPRWGTHIVGVDRDTAELDDRIRLRTRLMFERGLVDEVRGLIDVGLREGVTAPRAIGYAQVLAWLDGEYDLDEAQERTFIGTRRYVRRQRSWFRRDTRIHWVDGSDPDLADTTIRTLGETRRMGER.

11–18 (GPTATGKS) contributes to the ATP binding site. 13–18 (TATGKS) lines the substrate pocket.

Belongs to the IPP transferase family. As to quaternary structure, monomer. Requires Mg(2+) as cofactor.

It catalyses the reaction adenosine(37) in tRNA + dimethylallyl diphosphate = N(6)-dimethylallyladenosine(37) in tRNA + diphosphate. Catalyzes the transfer of a dimethylallyl group onto the adenine at position 37 in tRNAs that read codons beginning with uridine, leading to the formation of N6-(dimethylallyl)adenosine (i(6)A). This is tRNA dimethylallyltransferase from Rhodococcus jostii (strain RHA1).